Consider the following 255-residue polypeptide: Tryptophan synthase alpha chain (255 aa).

Active-site proton acceptor residues include glutamate 42 and aspartate 53.

The protein belongs to the TrpA family. Tetramer of two alpha and two beta chains.

The catalysed reaction is (1S,2R)-1-C-(indol-3-yl)glycerol 3-phosphate + L-serine = D-glyceraldehyde 3-phosphate + L-tryptophan + H2O. Its pathway is amino-acid biosynthesis; L-tryptophan biosynthesis; L-tryptophan from chorismate: step 5/5. Functionally, the alpha subunit is responsible for the aldol cleavage of indoleglycerol phosphate to indole and glyceraldehyde 3-phosphate. The chain is Tryptophan synthase alpha chain from Wolinella succinogenes (strain ATCC 29543 / DSM 1740 / CCUG 13145 / JCM 31913 / LMG 7466 / NCTC 11488 / FDC 602W) (Vibrio succinogenes).